Here is a 459-residue protein sequence, read N- to C-terminus: Trigger factor (459 aa).

The region spanning 166 to 245 (GDFANIDLTA…VNSVKAEELP (80 aa)) is the PPIase FKBP-type domain.

This sequence belongs to the FKBP-type PPIase family. Tig subfamily.

The protein resides in the cytoplasm. It catalyses the reaction [protein]-peptidylproline (omega=180) = [protein]-peptidylproline (omega=0). Functionally, involved in protein export. Acts as a chaperone by maintaining the newly synthesized protein in an open conformation. Functions as a peptidyl-prolyl cis-trans isomerase. The protein is Trigger factor of Bifidobacterium longum subsp. infantis (strain ATCC 15697 / DSM 20088 / JCM 1222 / NCTC 11817 / S12).